Consider the following 264-residue polypeptide: Thymidylate synthase (264 aa).

Arg21 lines the dUMP pocket. Residue His51 coordinates (6R)-5,10-methylene-5,6,7,8-tetrahydrofolate. A dUMP-binding site is contributed by 126-127 (RR). The active-site Nucleophile is the Cys146. Residues 166–169 (RSAD), Asn177, and 207–209 (HIY) contribute to the dUMP site. Asp169 is a (6R)-5,10-methylene-5,6,7,8-tetrahydrofolate binding site. Residue Ala263 participates in (6R)-5,10-methylene-5,6,7,8-tetrahydrofolate binding.

The protein belongs to the thymidylate synthase family. Bacterial-type ThyA subfamily. Homodimer.

The protein resides in the cytoplasm. It carries out the reaction dUMP + (6R)-5,10-methylene-5,6,7,8-tetrahydrofolate = 7,8-dihydrofolate + dTMP. It functions in the pathway pyrimidine metabolism; dTTP biosynthesis. In terms of biological role, catalyzes the reductive methylation of 2'-deoxyuridine-5'-monophosphate (dUMP) to 2'-deoxythymidine-5'-monophosphate (dTMP) while utilizing 5,10-methylenetetrahydrofolate (mTHF) as the methyl donor and reductant in the reaction, yielding dihydrofolate (DHF) as a by-product. This enzymatic reaction provides an intracellular de novo source of dTMP, an essential precursor for DNA biosynthesis. The chain is Thymidylate synthase from Cupriavidus metallidurans (strain ATCC 43123 / DSM 2839 / NBRC 102507 / CH34) (Ralstonia metallidurans).